Here is a 497-residue protein sequence, read N- to C-terminus: 4,4'-diaponeurosporene oxygenase (497 aa).

7–19 contacts FAD; that stretch reads VIGGGLGGISAAI.

This sequence belongs to the carotenoid/retinoid oxidoreductase family. CrtP subfamily. The cofactor is FAD.

It catalyses the reaction all-trans-4,4'-diaponeurosporene + 2 AH2 + 2 O2 = 4,4'-diaponeurosporenal + 2 A + 3 H2O. It functions in the pathway carotenoid biosynthesis; staphyloxanthin biosynthesis; staphyloxanthin from farnesyl diphosphate: step 3/5. In terms of biological role, involved in the biosynthesis of the yellow-orange carotenoid staphyloxanthin, which plays a role in the virulence via its protective function against oxidative stress. Catalyzes the oxidation of the terminal methyl side group of 4,4'-diaponeurosporene to form 4,4'-diaponeurosporen-4-al. This chain is 4,4'-diaponeurosporene oxygenase, found in Staphylococcus aureus (strain MRSA252).